The sequence spans 184 residues: Uroplakin-2 (184 aa).

The signal sequence occupies residues 1-25; the sequence is MAPLLPIRTLPLILILLALLSPGAA. Positions 26–84 are excised as a propeptide; sequence DFNISSLSGLLSPALTESLLVALPPCHLTGGNATLMVRRANDSKVVTSSFVVPPCRGRR. N-linked (GlcNAc...) asparagine glycans are attached at residues Asn-28, Asn-57, and Asn-66. Residues 85-155 are Lumenal-facing; the sequence is ELVSVVDSGA…IGLGMARTGG (71 aa). Residues 156 to 176 traverse the membrane as a helical segment; sequence MVVITVLLSVAMFLLVLGFII. At 177-184 the chain is on the cytoplasmic side; the sequence is ALALGSRK.

It belongs to the uroplakin-2 family. Interacts with uroplakin-1a (UPK1A). In terms of tissue distribution, expressed in ureter.

It is found in the cell membrane. Its function is as follows. Component of the asymmetric unit membrane (AUM); a highly specialized biomembrane elaborated by terminally differentiated urothelial cells. May play an important role in regulating the assembly of the AUM. In Homo sapiens (Human), this protein is Uroplakin-2 (UPK2).